A 246-amino-acid chain; its full sequence is MWIGVISLFPEMFRAITDYGVTGRAVKNGLLSVQCWSPRDFTYDRHRTVDDRPYGGGPGMLMMVQPLREAIHAAKAAAGEGAKVIYLSPQGRKLDQQGVCELAMNQKMILVCGRYEGVDERVIKTEIDEEWSIGDYVLSGGELPAMTLIDSVSRFIPGVLGHHASAEEDSFVDGLLDCPHYTRPEVLEGMEVPPVLLSGNHAEIRRWRLKQSLGRTWLRRPELLESLALTDEQMVLLAEFQREHKP.

Residues glycine 113 and 133–138 (IGDYVL) contribute to the S-adenosyl-L-methionine site.

It belongs to the RNA methyltransferase TrmD family. As to quaternary structure, homodimer.

The protein resides in the cytoplasm. The catalysed reaction is guanosine(37) in tRNA + S-adenosyl-L-methionine = N(1)-methylguanosine(37) in tRNA + S-adenosyl-L-homocysteine + H(+). Functionally, specifically methylates guanosine-37 in various tRNAs. In Yersinia pseudotuberculosis serotype O:1b (strain IP 31758), this protein is tRNA (guanine-N(1)-)-methyltransferase.